Reading from the N-terminus, the 610-residue chain is UvrABC system protein C (610 aa).

The 79-residue stretch at 16-94 (NQPGVYRMYD…IKRYQPRYNV (79 aa)) folds into the GIY-YIG domain. One can recognise a UVR domain in the interval 204–239 (SQVIDALVARMEEASRALRFEEAARLRDQIQAVRRV).

Belongs to the UvrC family. In terms of assembly, interacts with UvrB in an incision complex.

Its subcellular location is the cytoplasm. In terms of biological role, the UvrABC repair system catalyzes the recognition and processing of DNA lesions. UvrC both incises the 5' and 3' sides of the lesion. The N-terminal half is responsible for the 3' incision and the C-terminal half is responsible for the 5' incision. The chain is UvrABC system protein C from Edwardsiella ictaluri (strain 93-146).